A 460-amino-acid polypeptide reads, in one-letter code: UDP-N-acetylmuramoylalanine--D-glutamate ligase (460 aa).

123 to 129 (GTNGKTT) is an ATP binding site.

This sequence belongs to the MurCDEF family.

It localises to the cytoplasm. It carries out the reaction UDP-N-acetyl-alpha-D-muramoyl-L-alanine + D-glutamate + ATP = UDP-N-acetyl-alpha-D-muramoyl-L-alanyl-D-glutamate + ADP + phosphate + H(+). Its pathway is cell wall biogenesis; peptidoglycan biosynthesis. Its function is as follows. Cell wall formation. Catalyzes the addition of glutamate to the nucleotide precursor UDP-N-acetylmuramoyl-L-alanine (UMA). This Enterococcus hirae protein is UDP-N-acetylmuramoylalanine--D-glutamate ligase (murD).